A 243-amino-acid polypeptide reads, in one-letter code: UDP-2,3-diacylglucosamine hydrolase (243 aa).

Positions 8, 10, 41, 79, and 114 each coordinate Mn(2+). 79–80 (NR) provides a ligand contact to substrate. Residues Asp-122, Lys-164, Lys-167, and His-195 each contribute to the substrate site. His-195 and His-197 together coordinate Mn(2+).

Belongs to the LpxH family. Mn(2+) is required as a cofactor.

It is found in the cell inner membrane. The catalysed reaction is UDP-2-N,3-O-bis[(3R)-3-hydroxytetradecanoyl]-alpha-D-glucosamine + H2O = 2-N,3-O-bis[(3R)-3-hydroxytetradecanoyl]-alpha-D-glucosaminyl 1-phosphate + UMP + 2 H(+). Its pathway is glycolipid biosynthesis; lipid IV(A) biosynthesis; lipid IV(A) from (3R)-3-hydroxytetradecanoyl-[acyl-carrier-protein] and UDP-N-acetyl-alpha-D-glucosamine: step 4/6. Hydrolyzes the pyrophosphate bond of UDP-2,3-diacylglucosamine to yield 2,3-diacylglucosamine 1-phosphate (lipid X) and UMP by catalyzing the attack of water at the alpha-P atom. Involved in the biosynthesis of lipid A, a phosphorylated glycolipid that anchors the lipopolysaccharide to the outer membrane of the cell. This is UDP-2,3-diacylglucosamine hydrolase from Vibrio vulnificus (strain YJ016).